The chain runs to 172 residues: NADH-quinone oxidoreductase subunit B 1 (172 aa).

The [4Fe-4S] cluster site is built by C42, C43, C107, and C137.

Belongs to the complex I 20 kDa subunit family. As to quaternary structure, NDH-1 is composed of 14 different subunits. Subunits NuoB, C, D, E, F, and G constitute the peripheral sector of the complex. Requires [4Fe-4S] cluster as cofactor.

It localises to the cell inner membrane. The enzyme catalyses a quinone + NADH + 5 H(+)(in) = a quinol + NAD(+) + 4 H(+)(out). Functionally, NDH-1 shuttles electrons from NADH, via FMN and iron-sulfur (Fe-S) centers, to quinones in the respiratory chain. Couples the redox reaction to proton translocation (for every two electrons transferred, four hydrogen ions are translocated across the cytoplasmic membrane), and thus conserves the redox energy in a proton gradient. This chain is NADH-quinone oxidoreductase subunit B 1, found in Anaeromyxobacter sp. (strain Fw109-5).